The chain runs to 417 residues: Transmembrane protease serine 11G (417 aa).

Residues 1 to 21 (MYQPGILVRRKRVWKPWTVAL) are Cytoplasmic-facing. A helical; Signal-anchor for type II membrane protein membrane pass occupies residues 22 to 42 (ITVALLLALAVLIGLLVYFLV). Residues 43–417 (YDEKTHYYQA…RDWIKSKTSI (375 aa)) are Extracellular-facing. The SEA domain maps to 46-165 (KTHYYQASFW…PYLREMNAAQ (120 aa)). Asparagine 60 carries an N-linked (GlcNAc...) asparagine glycan. Residues 186-416 (IADGKPADKA…YRDWIKSKTS (231 aa)) form the Peptidase S1 domain. Cysteines 211 and 227 form a disulfide. Active-site charge relay system residues include histidine 226 and aspartate 271. 2 disulfides stabilise this stretch: cysteine 336/cysteine 352 and cysteine 363/cysteine 392. Serine 367 (charge relay system) is an active-site residue.

The protein belongs to the peptidase S1 family.

The protein localises to the membrane. The protein is Transmembrane protease serine 11G (Tmprss11g) of Mus musculus (Mouse).